The primary structure comprises 310 residues: Tagatose-6-phosphate kinase (310 aa).

The protein belongs to the carbohydrate kinase PfkB family. LacC subfamily.

The enzyme catalyses D-tagatofuranose 6-phosphate + ATP = D-tagatofuranose 1,6-bisphosphate + ADP + H(+). It functions in the pathway carbohydrate metabolism; D-tagatose 6-phosphate degradation; D-glyceraldehyde 3-phosphate and glycerone phosphate from D-tagatose 6-phosphate: step 1/2. The chain is Tagatose-6-phosphate kinase from Staphylococcus epidermidis (strain ATCC 35984 / DSM 28319 / BCRC 17069 / CCUG 31568 / BM 3577 / RP62A).